The primary structure comprises 483 residues: Iron-sulfur cluster assembly SufBD family protein ycf24 (483 aa).

This sequence belongs to the iron-sulfur cluster assembly SufBD family.

It localises to the plastid. Its subcellular location is the chloroplast. This Guillardia theta (Cryptophyte) protein is Iron-sulfur cluster assembly SufBD family protein ycf24 (ycf24).